A 211-amino-acid chain; its full sequence is Holliday junction branch migration complex subunit RuvA (211 aa).

The interval Met1–Ala64 is domain I. The tract at residues Asn65 to Val143 is domain II. A flexible linker region spans residues Ser144–Thr162. Residues Phe163 to Ile211 are domain III.

Belongs to the RuvA family. As to quaternary structure, homotetramer. Forms an RuvA(8)-RuvB(12)-Holliday junction (HJ) complex. HJ DNA is sandwiched between 2 RuvA tetramers; dsDNA enters through RuvA and exits via RuvB. An RuvB hexamer assembles on each DNA strand where it exits the tetramer. Each RuvB hexamer is contacted by two RuvA subunits (via domain III) on 2 adjacent RuvB subunits; this complex drives branch migration. In the full resolvosome a probable DNA-RuvA(4)-RuvB(12)-RuvC(2) complex forms which resolves the HJ.

Its subcellular location is the cytoplasm. The RuvA-RuvB-RuvC complex processes Holliday junction (HJ) DNA during genetic recombination and DNA repair, while the RuvA-RuvB complex plays an important role in the rescue of blocked DNA replication forks via replication fork reversal (RFR). RuvA specifically binds to HJ cruciform DNA, conferring on it an open structure. The RuvB hexamer acts as an ATP-dependent pump, pulling dsDNA into and through the RuvAB complex. HJ branch migration allows RuvC to scan DNA until it finds its consensus sequence, where it cleaves and resolves the cruciform DNA. This chain is Holliday junction branch migration complex subunit RuvA, found in Colwellia psychrerythraea (strain 34H / ATCC BAA-681) (Vibrio psychroerythus).